Reading from the N-terminus, the 458-residue chain is ATP synthase subunit beta (458 aa).

148–155 (GGAGVGKT) is a binding site for ATP.

It belongs to the ATPase alpha/beta chains family. F-type ATPases have 2 components, CF(1) - the catalytic core - and CF(0) - the membrane proton channel. CF(1) has five subunits: alpha(3), beta(3), gamma(1), delta(1), epsilon(1). CF(0) has three main subunits: a(1), b(2) and c(9-12). The alpha and beta chains form an alternating ring which encloses part of the gamma chain. CF(1) is attached to CF(0) by a central stalk formed by the gamma and epsilon chains, while a peripheral stalk is formed by the delta and b chains.

The protein localises to the cell inner membrane. The enzyme catalyses ATP + H2O + 4 H(+)(in) = ADP + phosphate + 5 H(+)(out). Functionally, produces ATP from ADP in the presence of a proton gradient across the membrane. The catalytic sites are hosted primarily by the beta subunits. This is ATP synthase subunit beta from Pseudomonas fluorescens (strain SBW25).